Here is a 691-residue protein sequence, read N- to C-terminus: DNA ligase (691 aa).

NAD(+) contacts are provided by residues 56-60 (DRAYD), 104-105 (SI), and Glu-139. Lys-141 (N6-AMP-lysine intermediate) is an active-site residue. NAD(+) contacts are provided by Arg-162, Glu-198, Lys-314, and Lys-338. Residues Cys-429, Cys-432, Cys-445, and Cys-451 each coordinate Zn(2+). Residues 607–691 (TAGDALSGQT…SLLESHGIEI (85 aa)) enclose the BRCT domain.

This sequence belongs to the NAD-dependent DNA ligase family. LigA subfamily. The cofactor is Mg(2+). Requires Mn(2+) as cofactor.

The enzyme catalyses NAD(+) + (deoxyribonucleotide)n-3'-hydroxyl + 5'-phospho-(deoxyribonucleotide)m = (deoxyribonucleotide)n+m + AMP + beta-nicotinamide D-nucleotide.. DNA ligase that catalyzes the formation of phosphodiester linkages between 5'-phosphoryl and 3'-hydroxyl groups in double-stranded DNA using NAD as a coenzyme and as the energy source for the reaction. It is essential for DNA replication and repair of damaged DNA. In Natronomonas pharaonis (strain ATCC 35678 / DSM 2160 / CIP 103997 / JCM 8858 / NBRC 14720 / NCIMB 2260 / Gabara) (Halobacterium pharaonis), this protein is DNA ligase.